Reading from the N-terminus, the 235-residue chain is Large ribosomal subunit protein uL1 (235 aa).

This sequence belongs to the universal ribosomal protein uL1 family. In terms of assembly, part of the 50S ribosomal subunit.

Functionally, binds directly to 23S rRNA. The L1 stalk is quite mobile in the ribosome, and is involved in E site tRNA release. In terms of biological role, protein L1 is also a translational repressor protein, it controls the translation of the L11 operon by binding to its mRNA. The polypeptide is Large ribosomal subunit protein uL1 (Prochlorococcus marinus (strain MIT 9515)).